Consider the following 539-residue polypeptide: Glycerophosphoinositol inositolphosphodiesterase GDPD2 (539 aa).

Residues Met1–Cys38 are Cytoplasmic-facing. Residues Ile39–Leu59 form a helical membrane-spanning segment. Topologically, residues Val60–Ala85 are extracellular. Residues Phe86–Leu106 form a helical membrane-spanning segment. The Cytoplasmic portion of the chain corresponds to Leu107–Lys121. Residues Val122 to Trp142 traverse the membrane as a helical segment. Over Gln143–Gln154 the chain is Extracellular. A helical transmembrane segment spans residues Ala155 to Val175. Over Ala176 to Lys188 the chain is Cytoplasmic. Residues Ile189 to Ile209 form a helical membrane-spanning segment. Topologically, residues Ser210–Tyr490 are extracellular. The GP-PDE domain maps to Pro224–Arg479. Residues Glu256, Asp258, and His271 each coordinate a divalent metal cation. An N-linked (GlcNAc...) asparagine glycan is attached at Asn442. Residues Leu491–Leu511 traverse the membrane as a helical segment. The Cytoplasmic portion of the chain corresponds to Gln512–Glu539.

The protein belongs to the glycerophosphoryl diester phosphodiesterase family. It depends on Ca(2+) as a cofactor.

The protein resides in the cell membrane. Its subcellular location is the cytoplasm. It localises to the cytoskeleton. It catalyses the reaction sn-glycero-3-phospho-1D-myo-inositol + H2O = 1D-myo-inositol 1-phosphate + glycerol + H(+). In terms of biological role, has glycerophosphoinositol inositolphosphodiesterase activity and specifically hydrolyzes glycerophosphoinositol, with no activity for other substrates such as glycerophosphoinositol 4-phosphate, glycerophosphocholine, glycerophosphoethanolamine, and glycerophosphoserine. Accelerates the program of osteoblast differentiation and growth. May play a role in remodeling of the actin cytoskeleton. The polypeptide is Glycerophosphoinositol inositolphosphodiesterase GDPD2 (GDPD2) (Homo sapiens (Human)).